The sequence spans 114 residues: U17-barytoxin-Tl1d (114 aa).

A signal peptide spans 1-20; that stretch reads MKTIIVFLSLLVLATKFGDA. A propeptide spanning residues 21–74 is cleaved from the precursor; that stretch reads NEGVNQEQMKEVIQNEFREDFLNEMAPMSLLQQLEAIESTLLEKEADRNSRQKR. 3 disulfides stabilise this stretch: Cys75/Cys88, Cys82/Cys93, and Cys87/Cys108.

The protein belongs to the neurotoxin 14 (magi-1) family. 03 (ICK-30-40) subfamily. In terms of tissue distribution, expressed by the venom gland.

Its subcellular location is the secreted. Its function is as follows. Ion channel inhibitor. In Trittame loki (Brush-footed trapdoor spider), this protein is U17-barytoxin-Tl1d.